We begin with the raw amino-acid sequence, 213 residues long: MITIVLLILAYLLGSIPSGLWIGQVFFQINLREHGSGNTGTTNTFRILGKKAGMATFVIDFFKGTLATLLPIIFHLQGVSPLIFGLLAVIGHTFPIFAGFKGGKAVATSAGVIFGFAPIFCLYLAIIFFGALYLGSMISLSSVTASIAAVIGVLLFPLFGFILSNYDSLFITIILALASLIIIRHKDNIARIKNKTENLVPWGLNLTHQDPKK.

A run of 6 helical transmembrane segments spans residues 2–22, 52–74, 81–100, 112–132, 143–163, and 164–184; these read ITIV…GLWI, AGMA…PIIF, PLIF…FAGF, VIFG…FGAL, VTAS…GFIL, and SNYD…IIIR.

It belongs to the PlsY family. Probably interacts with PlsX.

Its subcellular location is the cell membrane. It catalyses the reaction an acyl phosphate + sn-glycerol 3-phosphate = a 1-acyl-sn-glycero-3-phosphate + phosphate. It participates in lipid metabolism; phospholipid metabolism. Its function is as follows. Catalyzes the transfer of an acyl group from acyl-phosphate (acyl-PO(4)) to glycerol-3-phosphate (G3P) to form lysophosphatidic acid (LPA). This enzyme utilizes acyl-phosphate as fatty acyl donor, but not acyl-CoA or acyl-ACP. In Streptococcus pneumoniae (strain Hungary19A-6), this protein is Glycerol-3-phosphate acyltransferase.